The sequence spans 604 residues: Serine/threonine-protein phosphatase 2B catalytic subunit A2 (604 aa).

The disordered stretch occupies residues 21–48; the sequence is NKTERPQSSTTPIDSKASTVAAANSTAT. Position 31 is a phosphothreonine (T31). The span at 35-48 shows a compositional bias: low complexity; sequence SKASTVAAANSTAT. Fe cation contacts are provided by D144, H146, and D172. Residues D172 and N204 each contribute to the Zn(2+) site. H205 (proton donor) is an active-site residue. Zn(2+) contacts are provided by H253 and H359. The tract at residues 470 to 497 is disordered; that stretch reads KKLPQAGKSEATPQPATSASPKHASILD. A compositionally biased stretch (polar residues) spans 480-489; sequence ATPQPATSAS. 2 positions are modified to phosphoserine: S489 and S520. The segment at 501–523 is calmodulin-binding; sequence RRKALRNKILAVAKVSRMYSVLR.

Belongs to the PPP phosphatase family. PP-2B subfamily. As to quaternary structure, composed of two components (A and B), the A component is the catalytic subunit and the B component confers calcium sensitivity. Fe(3+) serves as cofactor. Requires Zn(2+) as cofactor.

The catalysed reaction is O-phospho-L-seryl-[protein] + H2O = L-seryl-[protein] + phosphate. It carries out the reaction O-phospho-L-threonyl-[protein] + H2O = L-threonyl-[protein] + phosphate. Its function is as follows. Calcium-dependent, calmodulin-stimulated protein phosphatase. This subunit may have a role in the calmodulin activation of calcineurin. This chain is Serine/threonine-protein phosphatase 2B catalytic subunit A2 (CMP2), found in Saccharomyces cerevisiae (strain ATCC 204508 / S288c) (Baker's yeast).